A 301-amino-acid polypeptide reads, in one-letter code: Protoheme IX farnesyltransferase 1 (301 aa).

A run of 9 helical transmembrane segments spans residues 29-49, 51-71, 101-121, 123-143, 150-170, 177-197, 223-243, 244-264, and 274-294; these read VVAL…PHAV, VQPL…AAAL, ALIF…SLVN, LTAW…TAYL, NIVI…TAVT, ALLL…ALAI, CILL…LVGM, CGPV…YKAW, and LAMQ…MALL.

Belongs to the UbiA prenyltransferase family. Protoheme IX farnesyltransferase subfamily.

It is found in the cell inner membrane. It carries out the reaction heme b + (2E,6E)-farnesyl diphosphate + H2O = Fe(II)-heme o + diphosphate. It functions in the pathway porphyrin-containing compound metabolism; heme O biosynthesis; heme O from protoheme: step 1/1. Functionally, converts heme B (protoheme IX) to heme O by substitution of the vinyl group on carbon 2 of heme B porphyrin ring with a hydroxyethyl farnesyl side group. This Shewanella baltica (strain OS195) protein is Protoheme IX farnesyltransferase 1.